We begin with the raw amino-acid sequence, 215 residues long: Reticulon-like protein B14 (215 aa).

The Reticulon domain occupies phenylalanine 31–threonine 211. Transmembrane regions (helical) follow at residues lysine 41–glutamate 61, tyrosine 62–tryptophan 82, and leucine 141–phenylalanine 161.

The protein localises to the endoplasmic reticulum membrane. This is Reticulon-like protein B14 (RTNLB14) from Arabidopsis thaliana (Mouse-ear cress).